The chain runs to 162 residues: 2-C-methyl-D-erythritol 2,4-cyclodiphosphate synthase (162 aa).

Asp-12 and His-14 together coordinate a divalent metal cation. 4-CDP-2-C-methyl-D-erythritol 2-phosphate contacts are provided by residues 12–14 (DVH) and 38–39 (HS). His-46 contacts a divalent metal cation. Residues 60–62 (DIG), 136–139 (TTTE), Phe-143, and Arg-146 each bind 4-CDP-2-C-methyl-D-erythritol 2-phosphate.

The protein belongs to the IspF family. Homotrimer. A divalent metal cation serves as cofactor.

The enzyme catalyses 4-CDP-2-C-methyl-D-erythritol 2-phosphate = 2-C-methyl-D-erythritol 2,4-cyclic diphosphate + CMP. Its pathway is isoprenoid biosynthesis; isopentenyl diphosphate biosynthesis via DXP pathway; isopentenyl diphosphate from 1-deoxy-D-xylulose 5-phosphate: step 4/6. Involved in the biosynthesis of isopentenyl diphosphate (IPP) and dimethylallyl diphosphate (DMAPP), two major building blocks of isoprenoid compounds. Catalyzes the conversion of 4-diphosphocytidyl-2-C-methyl-D-erythritol 2-phosphate (CDP-ME2P) to 2-C-methyl-D-erythritol 2,4-cyclodiphosphate (ME-CPP) with a corresponding release of cytidine 5-monophosphate (CMP). This Porphyromonas gingivalis (strain ATCC BAA-308 / W83) protein is 2-C-methyl-D-erythritol 2,4-cyclodiphosphate synthase.